The chain runs to 296 residues: Giardin subunit alpha-3 (296 aa).

Annexin repeat units follow at residues 3–72, 74–146, 153–222, and 226–295; these read DTVT…SNCW, ELPV…TWIK, NNIN…TAHY, and GMNN…VLWR.

The protein belongs to the annexin family. Giardin subunit alpha subfamily.

The protein resides in the cytoplasm. The protein localises to the cytoskeleton. Functionally, giardins are involved in parasite attachment to the intestinal mucosa and in the cytoskeletal disassembly and reassembly that marks the transition from infectious trophozoite to transmissible cyst. They may interact with other cytoskeletal proteins such as microtubules in the microribbons or crossbridges, to maintain the integrity of the ventral disk. The protein is Giardin subunit alpha-3 of Giardia intestinalis (Giardia lamblia).